The primary structure comprises 162 residues: RNA pyrophosphohydrolase (162 aa).

The Nudix hydrolase domain maps to 11–155; the sequence is PYRPCVGIVL…KRAVYEEVVA (145 aa). Positions 45–66 match the Nudix box motif; sequence GGIDEGEKPREAALRELWEETG.

The protein belongs to the Nudix hydrolase family. RppH subfamily. A divalent metal cation serves as cofactor.

Functionally, accelerates the degradation of transcripts by removing pyrophosphate from the 5'-end of triphosphorylated RNA, leading to a more labile monophosphorylated state that can stimulate subsequent ribonuclease cleavage. The chain is RNA pyrophosphohydrolase from Cereibacter sphaeroides (strain ATCC 17023 / DSM 158 / JCM 6121 / CCUG 31486 / LMG 2827 / NBRC 12203 / NCIMB 8253 / ATH 2.4.1.) (Rhodobacter sphaeroides).